The sequence spans 213 residues: ATP-dependent Clp protease proteolytic subunit 3 (213 aa).

Ser107 acts as the Nucleophile in catalysis. His132 is a catalytic residue.

The protein belongs to the peptidase S14 family. In terms of assembly, fourteen ClpP subunits assemble into 2 heptameric rings which stack back to back to give a disk-like structure with a central cavity, resembling the structure of eukaryotic proteasomes.

Its subcellular location is the cytoplasm. It catalyses the reaction Hydrolysis of proteins to small peptides in the presence of ATP and magnesium. alpha-casein is the usual test substrate. In the absence of ATP, only oligopeptides shorter than five residues are hydrolyzed (such as succinyl-Leu-Tyr-|-NHMec, and Leu-Tyr-Leu-|-Tyr-Trp, in which cleavage of the -Tyr-|-Leu- and -Tyr-|-Trp bonds also occurs).. Functionally, cleaves peptides in various proteins in a process that requires ATP hydrolysis. Has a chymotrypsin-like activity. Plays a major role in the degradation of misfolded proteins. This is ATP-dependent Clp protease proteolytic subunit 3 from Frankia casuarinae (strain DSM 45818 / CECT 9043 / HFP020203 / CcI3).